The primary structure comprises 95 residues: Auxin-responsive protein SAUR27 (95 aa).

It belongs to the ARG7 family. In terms of assembly, interacts with PP2C-D1. Higher expression in thermo-responsive cultivars (e.g. cv. Alst-1, cv. Ang-0 and cv. Com-0) than in low thermo-responsive cultivars (e.g. cv. Dja-1, cv. El-0 and cv. Kon).

The protein localises to the cell membrane. Functionally, functions as a positive effector of cell expansion through modulation of auxin transport. Involved in thermo-responsiveness of plant architecture. Enhances plasma membrane H(+)-ATPase. This chain is Auxin-responsive protein SAUR27, found in Arabidopsis thaliana (Mouse-ear cress).